Consider the following 279-residue polypeptide: High choriolytic enzyme 2 (279 aa).

The N-terminal stretch at Met-1–Ala-20 is a signal peptide. Positions Leu-21 to Arg-79 are cleaved as a propeptide — activation peptide. Residues Glu-26–Glu-40 are compositionally biased toward basic and acidic residues. Residues Glu-26–Asp-46 form a disordered region. The N-linked (GlcNAc...) asparagine glycan is linked to Asn-62. The region spanning Asn-80 to Arg-279 is the Peptidase M12A domain. Cystine bridges form between Cys-84/Cys-89, Cys-129/Cys-278, and Cys-150/Cys-170. His-178 contributes to the Zn(2+) binding site. The active site involves Glu-179. The Zn(2+) site is built by His-182 and His-188.

Zn(2+) serves as cofactor.

The protein resides in the zymogen granule. It catalyses the reaction Hydrolysis of the inner layer of fish egg envelope. Also hydrolysis of casein and small molecule substrates such as succinyl-Leu-Leu-Val-Tyr-|-7-(4-methyl)coumarylamide.. Functionally, participates in the breakdown of the egg envelope, which is derived from the egg extracellular matrix, at the time of hatching. Thus allowing the newly hatched fish to swim free. HCE binds tightly to the egg envelope while it exerts the choriolytic swelling action. This is High choriolytic enzyme 2 (hceb) from Oryzias latipes (Japanese rice fish).